Here is a 477-residue protein sequence, read N- to C-terminus: Glycogen synthase (477 aa).

Residue Lys-15 participates in ADP-alpha-D-glucose binding.

This sequence belongs to the glycosyltransferase 1 family. Bacterial/plant glycogen synthase subfamily.

The catalysed reaction is [(1-&gt;4)-alpha-D-glucosyl](n) + ADP-alpha-D-glucose = [(1-&gt;4)-alpha-D-glucosyl](n+1) + ADP + H(+). It functions in the pathway glycan biosynthesis; glycogen biosynthesis. In terms of biological role, synthesizes alpha-1,4-glucan chains using ADP-glucose. This Shigella flexneri serotype 5b (strain 8401) protein is Glycogen synthase.